The chain runs to 62 residues: MPKMKTKSALKKRIKITGTGKIMREQAYRSHLSQNKTTKQKRQARKSVQMHSSDVKRFKALI.

Residues glutamate 25–isoleucine 62 form a disordered region. The segment covering serine 53 to isoleucine 62 has biased composition (basic and acidic residues).

Belongs to the bacterial ribosomal protein bL35 family.

The sequence is that of Large ribosomal subunit protein bL35 from Mycoplasmopsis fermentans (Mycoplasma fermentans).